Consider the following 348-residue polypeptide: NADH-ubiquinone oxidoreductase chain 2 (348 aa).

The next 10 membrane-spanning stretches (helical) occupy residues 3–23, 25–45, 59–79, 93–115, 149–169, 178–198, 201–221, 239–259, 276–296, and 326–346; these read PIII…VLMS, HWFM…PVLM, YFLT…INLI, TAST…HFWV, LNMT…GWGG, ILAF…MFNP, TLLN…ILIF, IMTV…PLSG, IALA…YMRL, and LPTL…MMML.

Belongs to the complex I subunit 2 family. In terms of assembly, core subunit of respiratory chain NADH dehydrogenase (Complex I) which is composed of 45 different subunits. Interacts with TMEM242.

It localises to the mitochondrion inner membrane. The catalysed reaction is a ubiquinone + NADH + 5 H(+)(in) = a ubiquinol + NAD(+) + 4 H(+)(out). Core subunit of the mitochondrial membrane respiratory chain NADH dehydrogenase (Complex I) which catalyzes electron transfer from NADH through the respiratory chain, using ubiquinone as an electron acceptor. Essential for the catalytic activity and assembly of complex I. The chain is NADH-ubiquinone oxidoreductase chain 2 from Thyroptera tricolor (Spix's disk-winged bat).